Consider the following 279-residue polypeptide: Glutamate racemase (279 aa).

Residues 13-14 (DS) and 45-46 (YG) contribute to the substrate site. Cys-76 (proton donor/acceptor) is an active-site residue. Position 77–78 (77–78 (NT)) interacts with substrate. Residue Cys-185 is the Proton donor/acceptor of the active site. 186–187 (TH) is a substrate binding site.

The protein belongs to the aspartate/glutamate racemases family.

The enzyme catalyses L-glutamate = D-glutamate. Its pathway is cell wall biogenesis; peptidoglycan biosynthesis. Provides the (R)-glutamate required for cell wall biosynthesis. This is Glutamate racemase from Synechocystis sp. (strain ATCC 27184 / PCC 6803 / Kazusa).